The primary structure comprises 95 residues: Cell division topological specificity factor (95 aa).

This sequence belongs to the MinE family.

In terms of biological role, prevents the cell division inhibition by proteins MinC and MinD at internal division sites while permitting inhibition at polar sites. This ensures cell division at the proper site by restricting the formation of a division septum at the midpoint of the long axis of the cell. The chain is Cell division topological specificity factor from Psychrobacter cryohalolentis (strain ATCC BAA-1226 / DSM 17306 / VKM B-2378 / K5).